The chain runs to 95 residues: Protein FAM240C (95 aa).

The disordered stretch occupies residues 68 to 95 (KMLQGPGRCPDRVPEATESLHTKDKKAA). Residues 76–95 (CPDRVPEATESLHTKDKKAA) are compositionally biased toward basic and acidic residues.

It belongs to the FAM240 family.

The chain is Protein FAM240C (FAM240C) from Homo sapiens (Human).